The primary structure comprises 369 residues: DNA replication and repair protein RecF (369 aa).

Residue 30-37 coordinates ATP; that stretch reads GDNGSGKT.

Belongs to the RecF family.

Its subcellular location is the cytoplasm. Its function is as follows. The RecF protein is involved in DNA metabolism; it is required for DNA replication and normal SOS inducibility. RecF binds preferentially to single-stranded, linear DNA. It also seems to bind ATP. In Pseudomonas paraeruginosa (strain DSM 24068 / PA7) (Pseudomonas aeruginosa (strain PA7)), this protein is DNA replication and repair protein RecF.